Consider the following 76-residue polypeptide: UPF0352 protein ECA2748 (76 aa).

It belongs to the UPF0352 family.

The polypeptide is UPF0352 protein ECA2748 (Pectobacterium atrosepticum (strain SCRI 1043 / ATCC BAA-672) (Erwinia carotovora subsp. atroseptica)).